The chain runs to 252 residues: MKKEIKKNYRIGIIAALQQEVQILFNKLKNYKINKISNITFYIGNIHNIHVVLAKSGVGKVFSGITCALLLQKYKVKFIINIGSAGSLNKNLKPGSIIIPTNVCYHDVNLTAFGYSIGQIKNCPKTFLSNTLMLKLTEKYLFENKIKYQKKLMISGDIFIDTCEKKSLLKKRFPKAIAVDMEAAAIAHVCYQFNIPILIIKSISDSSDINAADNFKYFINLASKNSSLVTINVLQTLFKNTKNILFDNNNRC.

Glu-20 acts as the Proton acceptor in catalysis. Substrate contacts are provided by residues Gly-86, Ile-160, and 181–182; that span reads ME. The active-site Proton donor is Asp-205.

Belongs to the PNP/UDP phosphorylase family. MtnN subfamily. In terms of assembly, homodimer.

The enzyme catalyses S-adenosyl-L-homocysteine + H2O = S-(5-deoxy-D-ribos-5-yl)-L-homocysteine + adenine. It catalyses the reaction S-methyl-5'-thioadenosine + H2O = 5-(methylsulfanyl)-D-ribose + adenine. It carries out the reaction 5'-deoxyadenosine + H2O = 5-deoxy-D-ribose + adenine. Its pathway is amino-acid biosynthesis; L-methionine biosynthesis via salvage pathway; S-methyl-5-thio-alpha-D-ribose 1-phosphate from S-methyl-5'-thioadenosine (hydrolase route): step 1/2. In terms of biological role, catalyzes the irreversible cleavage of the glycosidic bond in both 5'-methylthioadenosine (MTA) and S-adenosylhomocysteine (SAH/AdoHcy) to adenine and the corresponding thioribose, 5'-methylthioribose and S-ribosylhomocysteine, respectively. Also cleaves 5'-deoxyadenosine, a toxic by-product of radical S-adenosylmethionine (SAM) enzymes, into 5-deoxyribose and adenine. Thus, is required for in vivo function of the radical SAM enzymes biotin synthase and lipoic acid synthase, that are inhibited by 5'-deoxyadenosine accumulation. This Buchnera aphidicola subsp. Baizongia pistaciae (strain Bp) protein is 5'-methylthioadenosine/S-adenosylhomocysteine nucleosidase.